The primary structure comprises 297 residues: Phosphatidylinositol N-acetylglucosaminyltransferase subunit C (297 aa).

The next 8 helical transmembrane spans lie at 51 to 71 (VVFE…FVVI), 80 to 100 (LAPH…YVLF), 117 to 137 (WADL…SPVL), 153 to 173 (SVFM…AAIV), 174 to 194 (SSTL…SRLP), 196 to 216 (SLHA…WPML), 227 to 244 (SYVG…GGLL), and 250 to 270 (GAVL…FYLI).

It belongs to the PIGC family. Component of the glycosylphosphatidylinositol-N-acetylglucosaminyltransferase (GPI-GnT) complex composed at least by PIGA, PIGC, PIGH, PIGP, PIGQ, PIGY and DPM2. Interacts with PIGQ. Interacts with the heterodimer PIGA:PIGH.

Its subcellular location is the endoplasmic reticulum membrane. It participates in glycolipid biosynthesis; glycosylphosphatidylinositol-anchor biosynthesis. Its function is as follows. Part of the glycosylphosphatidylinositol-N-acetylglucosaminyltransferase (GPI-GnT) complex that catalyzes the transfer of N-acetylglucosamine from UDP-N-acetylglucosamine to phosphatidylinositol and participates in the first step of GPI biosynthesis. The polypeptide is Phosphatidylinositol N-acetylglucosaminyltransferase subunit C (Homo sapiens (Human)).